The sequence spans 77 residues: Conotoxin LiC42 (77 aa).

Positions 1 to 22 (MKLTCVLIIAVLFLTASQLITA) are cleaved as a signal peptide. A propeptide spanning residues 23–47 (DYSRDKQEYGAERLRDAMGKFKGSR) is cleaved from the precursor. 3 cysteine pairs are disulfide-bonded: Cys49-Cys62, Cys56-Cys67, and Cys61-Cys76.

The protein belongs to the conotoxin O1 superfamily. Expressed by the venom duct.

It is found in the secreted. This Conus lividus (Livid cone) protein is Conotoxin LiC42.